A 628-amino-acid polypeptide reads, in one-letter code: MFNLRNFDVIVVGAGHAGTEAAMASSRMGCKTLLLTQKISDLGALSCNPAIGGIGKSHLVKEIDALGGMMAKAIDYSGIQFRILNSSKGPAVRSTRAQADKILYHETVKKILKKQNNLLILEAEVKDLIFKNYSVVGVLTQNEINFYSRSVVLAAGTFLGGKIHIGLKSYSAGRIGDKSAIDLSVRLRELSLRVNRLKTGTPPRIDINTVNFNNLLIQNSDTPVPVFSFMGNVSHHPKQIPCYLTHTNEKTHEIIRKNLDKSPIYTGFLKGLGPRYCPSIEDKIVRFPDRKSHQVFLEPEGLSSIKVYPNGISTSLPIEVQEQIVASIKGLEKSKIIRPGYAIEYDFFDPKDLNLTLESKLIKGLFFAGQINGTTGYEEAASQGLLAGLNAALSSKNTEGWFPRRDQAYLGVLIDDLTTQGTEEPYRMFTSRAEYRLSLREDNADLRLTEIGRKLGLVNDSRWIRYNQKVLNIQTEMNRLKKNKISPISPDADILKKLYNINLIKEISMSELLKRPQIRYQDLQSLESFRTGIVDLEAIGQIENEIKYAGYIKRQSEEIERHLKNENTFLSSIYDYNKIRGLSSEVVKKLNDYKPISIGQASRISGITPAAISILLIHLKKESYKHTL.

13–18 (GAGHAG) is an FAD binding site. 273–287 (GPRYCPSIEDKIVRF) contributes to the NAD(+) binding site.

This sequence belongs to the MnmG family. In terms of assembly, homodimer. Heterotetramer of two MnmE and two MnmG subunits. FAD is required as a cofactor.

It is found in the cytoplasm. Its function is as follows. NAD-binding protein involved in the addition of a carboxymethylaminomethyl (cmnm) group at the wobble position (U34) of certain tRNAs, forming tRNA-cmnm(5)s(2)U34. The sequence is that of tRNA uridine 5-carboxymethylaminomethyl modification enzyme MnmG from Buchnera aphidicola subsp. Acyrthosiphon pisum (strain APS) (Acyrthosiphon pisum symbiotic bacterium).